The following is a 68-amino-acid chain: DNA-directed RNA polymerase subunit omega (68 aa).

Belongs to the RNA polymerase subunit omega family. The RNAP catalytic core consists of 2 alpha, 1 beta, 1 beta' and 1 omega subunit. When a sigma factor is associated with the core the holoenzyme is formed, which can initiate transcription.

The catalysed reaction is RNA(n) + a ribonucleoside 5'-triphosphate = RNA(n+1) + diphosphate. In terms of biological role, promotes RNA polymerase assembly. Latches the N- and C-terminal regions of the beta' subunit thereby facilitating its interaction with the beta and alpha subunits. The polypeptide is DNA-directed RNA polymerase subunit omega (Geobacter sp. (strain M21)).